The sequence spans 218 residues: uncharacterized protein (218 aa).

Helical transmembrane passes span 14–34 (CLLS…YFTS) and 175–195 (LIIP…LALV).

It to H.pylori HP0270.

The protein localises to the cell membrane. This is an uncharacterized protein from Rickettsia prowazekii (strain Madrid E).